A 343-amino-acid chain; its full sequence is 2-alkenal reductase (NADP(+)-dependent) (343 aa).

Tyr55 and Tyr80 together coordinate substrate. Residues 165–166 (AV), Gly186, Lys190, Tyr206, Asn230, Cys252, Tyr258, 282–284 (FLV), and Asn332 contribute to the NADP(+) site.

Belongs to the NADP-dependent oxidoreductase L4BD family. In terms of assembly, homodimer.

The catalysed reaction is an n-alkanal + NADP(+) = an alk-2-enal + NADPH + H(+). Functionally, reduces the C=C double bonds of alpha, beta unsaturated enones, but has no activity on enones with an endocyclic C=C double-bond. Shows a high specificity for NADPH as the hybrid donor. Substrates are 1-nitrocyclohexene, 2-methylpentenal, trans-cinnamaldehyde, methyl-trans-2-methylcinnamaldehyde, trans-2-nonenal and 1-octen-3-one. Reduced activity with aplha-methyl transcinnamaldehyde, 1-cyclohexene-1-carboxaldehyde, methyl crotonate, (R)-pulegone, and dimethyl itaconate and no activity with maleimides, citral, (5R)- or (5S)-carvone, (S)-perillyl alcohol, and substituted cyclohexenones and cyclopentenones. May also act as a allyl-alcohol dehydrogenase by catalyzing the dehydrogenation of secondary allylic alcohols rather than saturated secondary alcohols. Allyl-alcohol dehydrogenase is specific for the S-stereoisomer of the alcohols. The chain is 2-alkenal reductase (NADP(+)-dependent) (DBR) from Nicotiana tabacum (Common tobacco).